The following is a 619-amino-acid chain: ATP-dependent zinc metalloprotease FtsH (619 aa).

The Cytoplasmic portion of the chain corresponds to 1-5; sequence MKYFK. Residues 6-26 traverse the membrane as a helical segment; sequence GISFYIIIFILILVIITFFTA. The Extracellular portion of the chain corresponds to 27–110; the sequence is TDNPPKMSYS…VTQPPQPPWW (84 aa). The chain crosses the membrane as a helical span at residues 111–131; that stretch reads VSMLPTVGLVIILILIWFFFI. The Cytoplasmic portion of the chain corresponds to 132-619; that stretch reads QQSQGGGGGN…GSSQTPQLEG (488 aa). An ATP-binding site is contributed by 204–211; it reads GPPGTGKT. Residue His426 participates in Zn(2+) binding. Glu427 is an active-site residue. Zn(2+)-binding residues include His430 and Asp502.

It in the central section; belongs to the AAA ATPase family. In the C-terminal section; belongs to the peptidase M41 family. Homohexamer. It depends on Zn(2+) as a cofactor.

Its subcellular location is the cell membrane. Acts as a processive, ATP-dependent zinc metallopeptidase for both cytoplasmic and membrane proteins. Plays a role in the quality control of integral membrane proteins. In Ruminiclostridium cellulolyticum (strain ATCC 35319 / DSM 5812 / JCM 6584 / H10) (Clostridium cellulolyticum), this protein is ATP-dependent zinc metalloprotease FtsH.